The following is a 418-amino-acid chain: Elongation factor Tu, chloroplastic (418 aa).

In terms of domain architecture, tr-type G spans 10–214 (KPHVNIGTIG…NVDSYIPTPQ (205 aa)). The G1 stretch occupies residues 19–26 (GHVDHGKT). Position 19 to 26 (19 to 26 (GHVDHGKT)) interacts with GTP. Thr-26 is a binding site for Mg(2+). The segment at 60–64 (GITIN) is G2. A G3 region spans residues 81-84 (DCPG). GTP is bound by residues 81-85 (DCPGH) and 136-139 (NKED). Positions 136 to 139 (NKED) are G4. The tract at residues 174-176 (SAL) is G5.

Belongs to the TRAFAC class translation factor GTPase superfamily. Classic translation factor GTPase family. EF-Tu/EF-1A subfamily.

It is found in the plastid. It localises to the chloroplast. The enzyme catalyses GTP + H2O = GDP + phosphate + H(+). In terms of biological role, GTP hydrolase that promotes the GTP-dependent binding of aminoacyl-tRNA to the A-site of ribosomes during protein biosynthesis. In Chlamydomonas reinhardtii (Chlamydomonas smithii), this protein is Elongation factor Tu, chloroplastic (tufA).